The primary structure comprises 192 residues: Lipid A acyltransferase PagP (192 aa).

The first 26 residues, 1-26 (MTVVNKSFLTILIFFCQILFPLNASA), serve as a signal peptide directing secretion. Catalysis depends on residues His64, Asp107, and Ser108.

The protein belongs to the lipid A palmitoyltransferase family. Homodimer.

Its subcellular location is the cell outer membrane. The catalysed reaction is a lipid A + a 1,2-diacyl-sn-glycero-3-phosphocholine = a hepta-acyl lipid A + a 2-acyl-sn-glycero-3-phosphocholine. It catalyses the reaction a lipid IVA + a 1,2-diacyl-sn-glycero-3-phosphocholine = a lipid IVB + a 2-acyl-sn-glycero-3-phosphocholine. It carries out the reaction a lipid IIA + a 1,2-diacyl-sn-glycero-3-phosphocholine = a lipid IIB + a 2-acyl-sn-glycero-3-phosphocholine. Its function is as follows. Transfers a fatty acid residue from the sn-1 position of a phospholipid to the N-linked hydroxyfatty acid chain on the proximal unit of lipid A or its precursors. The chain is Lipid A acyltransferase PagP from Cronobacter sakazakii (strain ATCC BAA-894) (Enterobacter sakazakii).